The primary structure comprises 179 residues: Bifunctional protein PyrR (179 aa).

Positions 97–109 (IILTDDVLYTGRT) match the PRPP-binding motif.

It belongs to the purine/pyrimidine phosphoribosyltransferase family. PyrR subfamily.

It catalyses the reaction UMP + diphosphate = 5-phospho-alpha-D-ribose 1-diphosphate + uracil. Functionally, regulates the transcription of the pyrimidine nucleotide (pyr) operon in response to exogenous pyrimidines. Its function is as follows. Also displays a weak uracil phosphoribosyltransferase activity which is not physiologically significant. The chain is Bifunctional protein PyrR from Elusimicrobium minutum (strain Pei191).